The sequence spans 362 residues: Endopolygalacturonase II (362 aa).

An N-terminal signal peptide occupies residues 1–20 (MHSFASLLRYGLAAGATLAS). Residues 21 to 27 (ASPIEAR) constitute a propeptide that is removed on maturation. Cysteine 30 and cysteine 45 are joined by a disulfide. One copy of the PbH1 1 repeat lies at 156–186 (SDDITLTDITINNADGDSLGGHNTDAFDVGN). Aspartate 201 acts as the Proton donor in catalysis. Cysteine 203 and cysteine 219 are oxidised to a cystine. PbH1 repeat units follow at residues 209-229 (GENI…SIGS), 238-259 (VKNV…RIKT), 267-289 (VSEI…VIQQ), and 301-322 (TNGV…DSKA). Histidine 223 is a catalytic residue. N-linked (GlcNAc...) asparagine glycosylation occurs at asparagine 240. 2 disulfides stabilise this stretch: cysteine 329–cysteine 334 and cysteine 353–cysteine 362.

Belongs to the glycosyl hydrolase 28 family.

It localises to the secreted. The enzyme catalyses (1,4-alpha-D-galacturonosyl)n+m + H2O = (1,4-alpha-D-galacturonosyl)n + (1,4-alpha-D-galacturonosyl)m.. Functionally, involved in maceration and soft-rotting of plant tissue. Hydrolyzes the 1,4-alpha glycosidic bonds of de-esterified pectate in the smooth region of the plant cell wall. This Aspergillus awamori (Black koji mold) protein is Endopolygalacturonase II (pgaII).